Consider the following 188-residue polypeptide: PRA1 family protein 3 (188 aa).

The residue at position 1 (M1) is an N-acetylmethionine. Over 1–35 (MDVNIAPLRAWDDFFPGSDRFARPDFRDISKWNNR) the chain is Cytoplasmic. 2 helical membrane-spanning segments follow: residues 36 to 56 (VVSN…MMIS) and 57 to 77 (IVGF…VLVF). Over 78 to 93 (TGFVWAAHNKDVLRRM) the chain is Cytoplasmic. Helical transmembrane passes span 94–114 (KKRY…FLIS) and 115–135 (MFGG…LMFI). A required for homodimer formation and heterodimer formation with ARL6IP1 region spans residues 103-117 (MVVMLASYFLISMFG). At 136-188 (HASLRLRNLKNKLENKMEGIGLKRTPMGIVLDALEQQEEGINRLTDYISKVKE) the chain is on the cytoplasmic side. The interval 136 to 188 (HASLRLRNLKNKLENKMEGIGLKRTPMGIVLDALEQQEEGINRLTDYISKVKE) is targeting to endoplasmic reticulum membrane.

Belongs to the PRA1 family. Homodimer. Heterodimer with ARL6IP1. Forms multimers. Interacts with ARL6. Interacts with prenylated RAB1A and RAB3A. Interacts with SLC1A1/EAAC1. Interacts with RTN2 (via first transmembrane domain). Does not interact with VAMP1, VAMP2 or VAMP3.

Its subcellular location is the endoplasmic reticulum membrane. It localises to the cell membrane. The protein localises to the cytoplasm. The protein resides in the cytoskeleton. Regulates intracellular concentrations of taurine and glutamate. Negatively modulates SLC1A1/EAAC1 glutamate transport activity by decreasing its affinity for glutamate in a PKC activity-dependent manner. Plays a role in the retention of SLC1A1/EAAC1 in the endoplasmic reticulum. In Homo sapiens (Human), this protein is PRA1 family protein 3 (ARL6IP5).